We begin with the raw amino-acid sequence, 258 residues long: uncharacterized protein (258 aa).

ATP is bound at residue 36–43; sequence GKAGTGKS.

This sequence belongs to the IIV-6 075L family.

This is an uncharacterized protein from Acheta domesticus (House cricket).